We begin with the raw amino-acid sequence, 150 residues long: Cytochrome c oxidase subunit 5A, mitochondrial (150 aa).

Residues 1-41 constitute a mitochondrion transit peptide; the sequence is MLGAALRRCAVAATTRAGPRGLLHSARTPGPAAAIQSVRCY. Positions 2–17 match the SIFI-degron motif; it reads LGAALRRCAVAATTRA. N6-acetyllysine is present on residues K87 and K113. Residue T141 is modified to Phosphothreonine.

Belongs to the cytochrome c oxidase subunit 5A family. As to quaternary structure, component of the cytochrome c oxidase (complex IV, CIV), a multisubunit enzyme composed of 14 subunits. The complex is composed of a catalytic core of 3 subunits MT-CO1, MT-CO2 and MT-CO3, encoded in the mitochondrial DNA, and 11 supernumerary subunits COX4I, COX5A, COX5B, COX6A, COX6B, COX6C, COX7A, COX7B, COX7C, COX8 and NDUFA4, which are encoded in the nuclear genome. The complex exists as a monomer or a dimer and forms supercomplexes (SCs) in the inner mitochondrial membrane with NADH-ubiquinone oxidoreductase (complex I, CI) and ubiquinol-cytochrome c oxidoreductase (cytochrome b-c1 complex, complex III, CIII), resulting in different assemblies (supercomplex SCI(1)III(2)IV(1) and megacomplex MCI(2)III(2)IV(2)). Interacts with AFG1L. Interacts with RAB5IF. In terms of processing, in response to mitochondrial stress, the precursor protein is ubiquitinated by the SIFI complex in the cytoplasm before mitochondrial import, leading to its degradation. Within the SIFI complex, UBR4 initiates ubiquitin chain that are further elongated or branched by KCMF1.

Its subcellular location is the mitochondrion inner membrane. The protein operates within energy metabolism; oxidative phosphorylation. Functionally, component of the cytochrome c oxidase, the last enzyme in the mitochondrial electron transport chain which drives oxidative phosphorylation. The respiratory chain contains 3 multisubunit complexes succinate dehydrogenase (complex II, CII), ubiquinol-cytochrome c oxidoreductase (cytochrome b-c1 complex, complex III, CIII) and cytochrome c oxidase (complex IV, CIV), that cooperate to transfer electrons derived from NADH and succinate to molecular oxygen, creating an electrochemical gradient over the inner membrane that drives transmembrane transport and the ATP synthase. Cytochrome c oxidase is the component of the respiratory chain that catalyzes the reduction of oxygen to water. Electrons originating from reduced cytochrome c in the intermembrane space (IMS) are transferred via the dinuclear copper A center (CU(A)) of subunit 2 and heme A of subunit 1 to the active site in subunit 1, a binuclear center (BNC) formed by heme A3 and copper B (CU(B)). The BNC reduces molecular oxygen to 2 water molecules using 4 electrons from cytochrome c in the IMS and 4 protons from the mitochondrial matrix. The protein is Cytochrome c oxidase subunit 5A, mitochondrial (COX5A) of Gorilla gorilla gorilla (Western lowland gorilla).